The chain runs to 406 residues: MPLLLYTCLLWLLSSGLWTVQAMDPNAAYMNTSRHHRVLASVNADFAFSLYKHLVALSPKKNVFISPVSISMALAMLSLGTCGHTRAQLLHGLGFNLTEKSEAEIHQSFQHLHQLLAESDSSLEMTLGNALFLDGSLELLESFSADIKHYYESEVLTLNFQDWATTASRQINGYVKSKTQGKIDDLFSGLNSPAVLILINYIFFKGTWKQPFDLASTREENFYVDETTVVKVPMMFQSGTIRYLHDSELPCQLVQLNYAGNGTVFFILPEKGKMNIVITALSRNTIDRWSAGLTRSQVDLYIPKVTISGAYDFGGVLEDMGIADLFTNHANFSRITQDAQLKLSKVFHKAVLQLSEEGVNTTGSTGVTLNPMSKPIIMRFNQPFLIMVFDHFTWSSLFLGRVVNPA.

The signal sequence occupies residues 1–22; it reads MPLLLYTCLLWLLSSGLWTVQA. 2 N-linked (GlcNAc...) asparagine glycosylation sites follow: Asn-31 and Asn-96. Gln-255 serves as a coordination point for cortisol. A glycan (N-linked (GlcNAc...) asparagine) is linked at Asn-261. Asp-287 provides a ligand contact to cortisol. Residues Asn-331 and Asn-360 are each glycosylated (N-linked (GlcNAc...) asparagine). A cortisol-binding site is contributed by Trp-394.

This sequence belongs to the serpin family. Expressed by the liver; secreted in plasma.

The protein localises to the secreted. Major transport protein for glucocorticoids and progestins in the blood of almost all vertebrate species. This Saimiri sciureus (Common squirrel monkey) protein is Corticosteroid-binding globulin (SERPINA6).